A 203-amino-acid polypeptide reads, in one-letter code: ATP-dependent Clp protease proteolytic subunit (203 aa).

The active-site Nucleophile is the serine 100. The active site involves histidine 125.

It belongs to the peptidase S14 family. As to quaternary structure, fourteen ClpP subunits assemble into 2 heptameric rings which stack back to back to give a disk-like structure with a central cavity, resembling the structure of eukaryotic proteasomes.

The protein resides in the cytoplasm. The enzyme catalyses Hydrolysis of proteins to small peptides in the presence of ATP and magnesium. alpha-casein is the usual test substrate. In the absence of ATP, only oligopeptides shorter than five residues are hydrolyzed (such as succinyl-Leu-Tyr-|-NHMec, and Leu-Tyr-Leu-|-Tyr-Trp, in which cleavage of the -Tyr-|-Leu- and -Tyr-|-Trp bonds also occurs).. Cleaves peptides in various proteins in a process that requires ATP hydrolysis. Has a chymotrypsin-like activity. Plays a major role in the degradation of misfolded proteins. In Anaeromyxobacter sp. (strain K), this protein is ATP-dependent Clp protease proteolytic subunit.